The primary structure comprises 61 residues: Metallothionein-1C (61 aa).

Residues 1 to 29 (MDPNCSCSTGSSCSCAGSCTCKACRCPSC) form a beta region. Positions 5, 7, 13, 15, 19, 21, 24, 26, 29, 33, 34, 36, 37, 41, 44, 48, 50, 57, 59, and 60 each coordinate a divalent metal cation. Positions 30-61 (KKSCCSCCPVGCAKCAQGCICKGASDKCSCCA) are alpha.

The protein belongs to the metallothionein superfamily. Type 1 family.

In terms of biological role, metallothioneins have a high content of cysteine residues that bind various heavy metals; these proteins are transcriptionally regulated by both heavy metals and glucocorticoids. The protein is Metallothionein-1C (MT1C) of Ovis aries (Sheep).